The sequence spans 623 residues: ATP-dependent zinc metalloprotease FtsH (623 aa).

Over 1–7 (MNQSFWR) the chain is Cytoplasmic. Residues 8-28 (PLFAILLFMLVFHLTNIFFAQ) traverse the membrane as a helical segment. The Periplasmic segment spans residues 29-117 (QGAQVAQISY…EVSALSTETP (89 aa)). The chain crosses the membrane as a helical span at residues 118–138 (LLLNALIYVAPWVILIAIWWV). Residues 139–623 (GMRSMRSQGP…SLNTAQAPPP (485 aa)) lie on the Cytoplasmic side of the membrane. ATP is bound at residue 214–221 (GPPGTGKT). Zn(2+) is bound at residue His435. Glu436 is an active-site residue. Zn(2+) contacts are provided by His439 and Asp511.

The protein in the central section; belongs to the AAA ATPase family. This sequence in the C-terminal section; belongs to the peptidase M41 family. In terms of assembly, homohexamer. Zn(2+) is required as a cofactor.

The protein resides in the cell inner membrane. In terms of biological role, acts as a processive, ATP-dependent zinc metallopeptidase for both cytoplasmic and membrane proteins. Plays a role in the quality control of integral membrane proteins. In Pelobacter propionicus (strain DSM 2379 / NBRC 103807 / OttBd1), this protein is ATP-dependent zinc metalloprotease FtsH.